Reading from the N-terminus, the 255-residue chain is Indole-3-glycerol phosphate synthase (255 aa).

Belongs to the TrpC family.

It catalyses the reaction 1-(2-carboxyphenylamino)-1-deoxy-D-ribulose 5-phosphate + H(+) = (1S,2R)-1-C-(indol-3-yl)glycerol 3-phosphate + CO2 + H2O. It participates in amino-acid biosynthesis; L-tryptophan biosynthesis; L-tryptophan from chorismate: step 4/5. The protein is Indole-3-glycerol phosphate synthase of Streptococcus gordonii (strain Challis / ATCC 35105 / BCRC 15272 / CH1 / DL1 / V288).